Reading from the N-terminus, the 254-residue chain is Lipid uptake coordinator A (254 aa).

The next 4 helical transmembrane spans lie at 5–25 (VAVL…FYFV), 44–64 (LRIA…FTLL), 85–105 (IMAH…EVWL), and 114–134 (LFGI…GFYL). The segment at 143–254 (PPPKPLKPKK…SGVQVAKVDE (112 aa)) is disordered. Residues 148–163 (LKPKKPKQRRLRRKKT) are compositionally biased toward basic residues. The segment covering 169–191 (AEPEAAEEAENTELAAQEDEEAV) has biased composition (acidic residues). The span at 192 to 220 (EAPPESIESPGGEPESATREAPAAETATA) shows a compositional bias: low complexity. Residues 227–244 (LRNRRPTGKTSHRRRRTR) are compositionally biased toward basic residues.

As to quaternary structure, interacts with the Mce1 and Mce4 accessory subunits Rv0199/OmamA, Rv0177/Mam1C and Rv3492c/Mam4B.

It localises to the cell membrane. Functionally, required for the import of both fatty acids and cholesterol during growth in macrophages and in axenic culture. Facilitates the uptake of these lipids by stabilizing protein subunits of the Mce1 and Mce4 multi-subunit transporters, which transport fatty acids and cholesterol, respectively. Required for full virulence in vivo. The polypeptide is Lipid uptake coordinator A (Mycobacterium tuberculosis (strain ATCC 25618 / H37Rv)).